The sequence spans 1801 residues: Protein mono-ADP-ribosyltransferase PARP14 (1801 aa).

Ser33 carries the phosphoserine modification. Positions 109–132 (SKTKEDVKEPDVSEELDTKLPLDG) are disordered. Macro domains follow at residues 791–978 (KCFS…KTVF), 1003–1190 (WEKG…ARRA), and 1216–1387 (DSGV…KKRE). A glycoprotein contacts are provided by residues Asn824, Leu833, 922 to 926 (SSGVF), Asp961, 1023 to 1024 (VQ), Ser1034, 1046 to 1049 (LSKS), 1133 to 1137 (GTGNL), 1175 to 1178 (DHEN), 1235 to 1236 (DI), Ser1247, Val1258, 1332 to 1336 (GTGNA), and Phe1371. Ser1403 and Ser1411 each carry phosphoserine. The WWE domain occupies 1523–1601 (EQESRADCIS…SLSVQRLTKS (79 aa)). The 197-residue stretch at 1605 to 1801 (IPAHWSDMKQ…YPEYLITFRK (197 aa)) folds into the PARP catalytic domain.

It belongs to the ARTD/PARP family. In terms of assembly, interacts with STAT6. Interacts with PARP10. Interacts with PARP9 in IFNG-stimulated macrophages; the interaction prevents PARP14-mediated STAT1 and STAT6 ADP-riboslylation. In terms of processing, auto-ADP-ribosylated. In terms of tissue distribution, expressed in macrophages.

Its subcellular location is the nucleus. The protein resides in the cytoplasm. The enzyme catalyses L-glutamyl-[protein] + NAD(+) = 5-O-(ADP-D-ribosyl)-L-glutamyl-[protein] + nicotinamide. Its function is as follows. ADP-ribosyltransferase that mediates mono-ADP-ribosylation of glutamate residues on target proteins. In contrast to PARP1 and PARP2, it is not able to mediate poly-ADP-ribosylation. Has been shown to catalyze the mono-ADP-ribosylation of STAT1 at 'Glu-657' and 'Glu-705', thus decreasing STAT1 phosphorylation which negatively regulates pro-inflammatory cytokine production in macrophages in response to IFNG stimulation. However, the role of ADP-ribosylation in the prevention of STAT1 phosphorylation has been called into question and it has been suggested that the inhibition of phosphorylation may be the result of sumoylation of STAT1 'Lys-703'. Mono-ADP-ribosylates STAT6; enhancing STAT6-dependent transcription. In macrophages, positively regulates MRC1 expression in response to IL4 stimulation by promoting STAT6 phosphorylation. Mono-ADP-ribosylates PARP9. This chain is Protein mono-ADP-ribosyltransferase PARP14, found in Homo sapiens (Human).